The primary structure comprises 357 residues: Vomeronasal type-1 receptor 5 (357 aa).

Residues 1–3 (MLK) are Extracellular-facing. The helical transmembrane segment at 4-24 (LVIIENMAEIMLFSLDLLLFS) threads the bilayer. The Cytoplasmic portion of the chain corresponds to 25–52 (TDILCFNFPSKMIKLPGFITIQIFFYPQ). A helical membrane pass occupies residues 53 to 73 (ASFGISANTILFLFHIFTFVF). Over 74–81 (SHRSKSID) the chain is Extracellular. The helical transmembrane segment at 82-102 (MIISHLSLIHILLLFTQAILV) threads the bilayer. Residues 103-130 (SLDFFGSQNTQDDLRCKVIVFLNKVMRG) lie on the Cytoplasmic side of the membrane. Residues 131–151 (LSICTPCLLNVLQAIISPSIF) traverse the membrane as a helical segment. Residues 152-163 (SLAKLKHPSASH) are Extracellular-facing. Residues 164-184 (ILGFFLFSWVLNMFIGVIFCC) form a helical membrane-spanning segment. The Cytoplasmic portion of the chain corresponds to 185–269 (TLWLPPVKWG…PVSPVKRASQ (85 aa)). Residues 270–290 (TILLLVSFVFIYWVDFMFSFS) form a helical membrane-spanning segment. At 291-300 (RGVTWINDSL) the chain is on the extracellular side. N297 is a glycosylation site (N-linked (GlcNAc...) asparagine). A helical membrane pass occupies residues 301–321 (LVWFQVIVANSYATISPLMLI). Residues 322 to 357 (YADNQIFKTLQMLWFKYLSPPKLMLKFNRQCGSTKK) lie on the Cytoplasmic side of the membrane.

The protein belongs to the G-protein coupled receptor 1 family.

The protein resides in the cell membrane. In terms of biological role, putative pheromone receptor. In Gorilla gorilla gorilla (Western lowland gorilla), this protein is Vomeronasal type-1 receptor 5 (VN1R5).